An 818-amino-acid polypeptide reads, in one-letter code: Sorting nexin-29 (818 aa).

Residues 36-180 (SDSDSRVTCL…ILFAINIDNK (145 aa)) form the RUN domain. A disordered region spans residues 267 to 299 (VSFDDDEEEQGTGDTLKKMPGTAESSEENSDRS). 7 positions are modified to phosphoserine: Ser-268, Ser-291, Ser-292, Ser-330, Ser-344, Ser-447, and Ser-452. Disordered stretches follow at residues 343–375 (KSID…PDRT) and 441–462 (RYRE…PSAS). Residues 445-462 (ASSPGQGSPLSSLLPSAS) are compositionally biased toward low complexity. Residues 467 to 547 (MTVHELRQAI…VLKVQLKKYV (81 aa)) adopt a coiled-coil conformation. Ser-642 bears the Phosphoserine mark. Thr-644 carries the post-translational modification Phosphothreonine. 2 positions are modified to phosphoserine: Ser-645 and Ser-649. Positions 659–782 (ALINVWIPSV…PFFVDITPPG (124 aa)) constitute a PX domain. The segment at 781–818 (PGEPLNKSSRPKAVSRFPKLSRGHPREVRNVEPQSGDL) is disordered.

The protein belongs to the sorting nexin family.

The polypeptide is Sorting nexin-29 (Snx29) (Mus musculus (Mouse)).